The chain runs to 330 residues: Low-redox potential peroxidase (330 aa).

An N-terminal signal peptide occupies residues 1–24 (MRSSTHIFVSFVVYCGVFVTSAIA). N-linked (GlcNAc...) asparagine glycosylation is present at asparagine 27. 3 disulfide bridges follow: cysteine 34–cysteine 285, cysteine 54–cysteine 123, and cysteine 251–cysteine 314. Ca(2+) is bound by residues glycine 69, aspartate 71, and serine 73. Histidine 178 contributes to the heme b binding site. Ca(2+) contacts are provided by serine 179, aspartate 196, threonine 198, and aspartate 203.

The protein belongs to the peroxidase family. Ligninase subfamily. The cofactor is Ca(2+). It depends on heme b as a cofactor.

Its subcellular location is the secreted. It catalyses the reaction 2 a phenolic donor + H2O2 = 2 a phenolic radical donor + 2 H2O. In terms of biological role, can oxidize the lignin redox mediator veratryl alcohol to veratryl aldehyde. May be involved in oxidation of lignocellulose substrates. The chain is Low-redox potential peroxidase (LnP) from Taiwanofungus camphoratus (Poroid brown-rot fungus).